Consider the following 787-residue polypeptide: Protein translocase subunit SecA (787 aa).

Residues Gln85, 103–107 (GEGKT), and Asp492 contribute to the ATP site.

This sequence belongs to the SecA family. In terms of assembly, monomer and homodimer. Part of the essential Sec protein translocation apparatus which comprises SecA, SecYEG and auxiliary proteins SecDF. Other proteins may also be involved.

Its subcellular location is the cell membrane. It localises to the cytoplasm. The enzyme catalyses ATP + H2O + cellular proteinSide 1 = ADP + phosphate + cellular proteinSide 2.. Functionally, part of the Sec protein translocase complex. Interacts with the SecYEG preprotein conducting channel. Has a central role in coupling the hydrolysis of ATP to the transfer of proteins into and across the cell membrane, serving as an ATP-driven molecular motor driving the stepwise translocation of polypeptide chains across the membrane. The protein is Protein translocase subunit SecA of Latilactobacillus sakei subsp. sakei (strain 23K) (Lactobacillus sakei subsp. sakei).